Reading from the N-terminus, the 411-residue chain is 2,3-bisphosphoglycerate-independent phosphoglycerate mutase (411 aa).

This sequence belongs to the BPG-independent phosphoglycerate mutase family. A-PGAM subfamily. As to quaternary structure, homotetramer. The cofactor is Mg(2+).

It catalyses the reaction (2R)-2-phosphoglycerate = (2R)-3-phosphoglycerate. The protein operates within carbohydrate degradation; glycolysis; pyruvate from D-glyceraldehyde 3-phosphate: step 3/5. Inhibited to approximately 20% by EDTA. Its function is as follows. Catalyzes the interconversion of 2-phosphoglycerate and 3-phosphoglycerate. In Pyrococcus furiosus (strain ATCC 43587 / DSM 3638 / JCM 8422 / Vc1), this protein is 2,3-bisphosphoglycerate-independent phosphoglycerate mutase (apgM).